Consider the following 149-residue polypeptide: Large ribosomal subunit protein bL9 (149 aa).

Belongs to the bacterial ribosomal protein bL9 family.

In terms of biological role, binds to the 23S rRNA. This Thermotoga petrophila (strain ATCC BAA-488 / DSM 13995 / JCM 10881 / RKU-1) protein is Large ribosomal subunit protein bL9.